The primary structure comprises 421 residues: Telomeric repeat-binding factor 1 (421 aa).

The tract at residues M1–G30 is disordered. N-acetylalanine is present on A2. The TRFH mediates dimerization stretch occupies residues E49–K255. K200 participates in a covalent cross-link: Glycyl lysine isopeptide (Lys-Gly) (interchain with G-Cter in SUMO2). Phosphoserine; by ATM is present on S206. The interval E252 to R365 is interaction with RLIM. A compositionally biased stretch (basic and acidic residues) spans N253–D266. The interval N253 to K366 is disordered. A compositionally biased stretch (polar residues) spans V284–S310. The Nuclear localization signal signature appears at K313–R367. The HTH myb-type domain maps to S362–L419. Residues W390 to K415 constitute a DNA-binding region (H-T-H motif).

In terms of assembly, homodimer; can contain both isoforms. Found in a complex with POT1; TINF2 and TNKS1. Interacts with ATM, TINF2, TNKS1, TNKS2, PINX1, NEK2 and MAPRE1. Component of the shelterin complex (telosome) composed of TERF1, TERF2, TINF2, TERF2IP ACD and POT1. Interacts with RLIM (via N-terminus). Interacts with FBXO4. Interaction with TINF2 protects against interaction with FBXO4 and subsequent polyubiquitination and proteasomal degradation. Interacts with GNL3L; this interaction promotes homodimerization. Interacts with TIN2. Interactions with GNL3L and TIN2 are mutually exclusive. Interacts with RTEL1. Interacts with CCDC79/TERB1. Phosphorylated preferentially on Ser-219 in an ATM-dependent manner in response to ionizing DNA damage. Post-translationally, ADP-ribosylation by TNKS1 or TNKS2 diminishes its ability to bind to telomeric DNA. In terms of processing, ubiquitinated by RLIM/RNF12, leading to its degradation by the proteasome. Ubiquitinated by a SCF (SKP1-CUL1-F-box protein) ubiquitin-protein ligase complex, leading to its degradation by the proteasome.

It localises to the nucleus. Its subcellular location is the chromosome. The protein resides in the telomere. It is found in the cytoplasm. The protein localises to the cytoskeleton. It localises to the spindle. Its function is as follows. Binds the telomeric double-stranded 5'-TTAGGG-3' repeat and negatively regulates telomere length. Involved in the regulation of the mitotic spindle. Component of the shelterin complex (telosome) that is involved in the regulation of telomere length and protection. Shelterin associates with arrays of double-stranded 5'-TTAGGG-3' repeats added by telomerase and protects chromosome ends; without its protective activity, telomeres are no longer hidden from the DNA damage surveillance and chromosome ends are inappropriately processed by DNA repair pathways. The protein is Telomeric repeat-binding factor 1 (Terf1) of Mus musculus (Mouse).